Here is a 716-residue protein sequence, read N- to C-terminus: Polyribonucleotide nucleotidyltransferase (716 aa).

Mg(2+)-binding residues include Asp-493 and Asp-499. The region spanning 560 to 619 is the KH domain; sequence PRMITIKINPEKIRDVIGKGGSVIRALTEETGTTIDISDDGVVTIASTSSEGMAEAKKRI. The S1 motif domain occupies 629–697; that stretch reads GQVYEGTVLK…EKGRVRLSAK (69 aa).

Belongs to the polyribonucleotide nucleotidyltransferase family. Mg(2+) is required as a cofactor.

It is found in the cytoplasm. The catalysed reaction is RNA(n+1) + phosphate = RNA(n) + a ribonucleoside 5'-diphosphate. Involved in mRNA degradation. Catalyzes the phosphorolysis of single-stranded polyribonucleotides processively in the 3'- to 5'-direction. This chain is Polyribonucleotide nucleotidyltransferase, found in Paraburkholderia xenovorans (strain LB400).